We begin with the raw amino-acid sequence, 513 residues long: GMP synthase [glutamine-hydrolyzing] (513 aa).

One can recognise a Glutamine amidotransferase type-1 domain in the interval 7 to 197 (TILVLDFGGQ…LFGVCGCTGE (191 aa)). Cysteine 84 functions as the Nucleophile in the catalytic mechanism. Residues histidine 171 and glutamate 173 contribute to the active site. Residues 198-387 (WTMENFIEEQ…LGLPEDIVWR (190 aa)) enclose the GMPS ATP-PPase domain. Residue 225–231 (SGGVDSS) coordinates ATP.

In terms of assembly, homodimer.

The enzyme catalyses XMP + L-glutamine + ATP + H2O = GMP + L-glutamate + AMP + diphosphate + 2 H(+). It participates in purine metabolism; GMP biosynthesis; GMP from XMP (L-Gln route): step 1/1. Its function is as follows. Catalyzes the synthesis of GMP from XMP. In Heliobacterium modesticaldum (strain ATCC 51547 / Ice1), this protein is GMP synthase [glutamine-hydrolyzing].